Consider the following 289-residue polypeptide: 4-hydroxybenzoate octaprenyltransferase (289 aa).

The next 7 membrane-spanning stretches (helical) occupy residues 33-53 (LWAL…AVFV), 99-119 (LFVV…TMTI), 141-161 (LPQV…FAAV), 163-183 (ESVP…AVAY), 213-233 (LIIG…GRLN), 238-258 (EFYW…KLIV), and 268-288 (AFLN…MSYW).

This sequence belongs to the UbiA prenyltransferase family. Requires Mg(2+) as cofactor.

It is found in the cell inner membrane. The catalysed reaction is all-trans-octaprenyl diphosphate + 4-hydroxybenzoate = 4-hydroxy-3-(all-trans-octaprenyl)benzoate + diphosphate. It functions in the pathway cofactor biosynthesis; ubiquinone biosynthesis. Catalyzes the prenylation of para-hydroxybenzoate (PHB) with an all-trans polyprenyl group. Mediates the second step in the final reaction sequence of ubiquinone-8 (UQ-8) biosynthesis, which is the condensation of the polyisoprenoid side chain with PHB, generating the first membrane-bound Q intermediate 3-octaprenyl-4-hydroxybenzoate. The chain is 4-hydroxybenzoate octaprenyltransferase from Enterobacter sp. (strain 638).